We begin with the raw amino-acid sequence, 397 residues long: Acetate kinase (397 aa).

Asn9 is a binding site for Mg(2+). Lys16 contacts ATP. Substrate is bound at residue Arg87. Catalysis depends on Asp144, which acts as the Proton donor/acceptor. Residues 204–208 (HLGNG), 279–281 (DCR), and 327–331 (GIGEN) each bind ATP. Glu381 contacts Mg(2+).

This sequence belongs to the acetokinase family. As to quaternary structure, homodimer. Mg(2+) is required as a cofactor. Mn(2+) serves as cofactor.

The protein localises to the cytoplasm. The enzyme catalyses acetate + ATP = acetyl phosphate + ADP. Its pathway is metabolic intermediate biosynthesis; acetyl-CoA biosynthesis; acetyl-CoA from acetate: step 1/2. Its function is as follows. Catalyzes the formation of acetyl phosphate from acetate and ATP. Can also catalyze the reverse reaction. The polypeptide is Acetate kinase (Chromobacterium violaceum (strain ATCC 12472 / DSM 30191 / JCM 1249 / CCUG 213 / NBRC 12614 / NCIMB 9131 / NCTC 9757 / MK)).